A 369-amino-acid chain; its full sequence is Histidinol-phosphate aminotransferase 3 (369 aa).

Position 220 is an N6-(pyridoxal phosphate)lysine (K220).

It belongs to the class-II pyridoxal-phosphate-dependent aminotransferase family. Histidinol-phosphate aminotransferase subfamily. As to quaternary structure, homodimer. Pyridoxal 5'-phosphate is required as a cofactor.

It carries out the reaction L-histidinol phosphate + 2-oxoglutarate = 3-(imidazol-4-yl)-2-oxopropyl phosphate + L-glutamate. It functions in the pathway amino-acid biosynthesis; L-histidine biosynthesis; L-histidine from 5-phospho-alpha-D-ribose 1-diphosphate: step 7/9. The protein is Histidinol-phosphate aminotransferase 3 (hisC3) of Mesorhizobium japonicum (strain LMG 29417 / CECT 9101 / MAFF 303099) (Mesorhizobium loti (strain MAFF 303099)).